A 157-amino-acid chain; its full sequence is 6,7-dimethyl-8-ribityllumazine synthase (157 aa).

Residues phenylalanine 22, 56–58 (AFE), and 81–83 (VLI) contribute to the 5-amino-6-(D-ribitylamino)uracil site. Residue 86–87 (ET) coordinates (2S)-2-hydroxy-3-oxobutyl phosphate. Histidine 89 (proton donor) is an active-site residue. Phenylalanine 114 lines the 5-amino-6-(D-ribitylamino)uracil pocket. (2S)-2-hydroxy-3-oxobutyl phosphate is bound at residue arginine 128.

It belongs to the DMRL synthase family.

It catalyses the reaction (2S)-2-hydroxy-3-oxobutyl phosphate + 5-amino-6-(D-ribitylamino)uracil = 6,7-dimethyl-8-(1-D-ribityl)lumazine + phosphate + 2 H2O + H(+). It participates in cofactor biosynthesis; riboflavin biosynthesis; riboflavin from 2-hydroxy-3-oxobutyl phosphate and 5-amino-6-(D-ribitylamino)uracil: step 1/2. Catalyzes the formation of 6,7-dimethyl-8-ribityllumazine by condensation of 5-amino-6-(D-ribitylamino)uracil with 3,4-dihydroxy-2-butanone 4-phosphate. This is the penultimate step in the biosynthesis of riboflavin. The protein is 6,7-dimethyl-8-ribityllumazine synthase of Chlamydia trachomatis serovar L2 (strain ATCC VR-902B / DSM 19102 / 434/Bu).